We begin with the raw amino-acid sequence, 527 residues long: Plant-specific TFIIB-related protein PTF2 (527 aa).

The segment at 1 to 30 (MRCKRCNGSNFERDEDTGNSYCGGCGTLRE) adopts a TFIIB-type zinc-finger fold.

In terms of assembly, can form homodimer. Interacts with TBP2. As to expression, expressed in shoot apical meristems, root tips, primordia of lateral roots, inflorescences, developing pollen grains and embryos.

The protein resides in the nucleus. Plant-specific TFIIB-related protein that plays important roles in pollen germination and embryogenesis, possibly by regulating gene expression through interaction with TBP2 and the subunits of RNA polymerases. Binds double-stranded DNA in vitro. This Arabidopsis thaliana (Mouse-ear cress) protein is Plant-specific TFIIB-related protein PTF2.